Reading from the N-terminus, the 207-residue chain is Large ribosomal subunit protein uL4 (207 aa).

The tract at residues 55 to 76 is disordered; it reads ALVSGGGKKPWRQKGTGRARHG. Basic residues predominate over residues 63-76; sequence KPWRQKGTGRARHG.

The protein belongs to the universal ribosomal protein uL4 family. As to quaternary structure, part of the 50S ribosomal subunit.

In terms of biological role, one of the primary rRNA binding proteins, this protein initially binds near the 5'-end of the 23S rRNA. It is important during the early stages of 50S assembly. It makes multiple contacts with different domains of the 23S rRNA in the assembled 50S subunit and ribosome. Functionally, forms part of the polypeptide exit tunnel. The protein is Large ribosomal subunit protein uL4 of Phytoplasma mali (strain AT).